The following is a 370-amino-acid chain: tRNA-specific 2-thiouridylase MnmA (370 aa).

ATP-binding positions include 10–17 (AMSGGVDS) and Met36. The Nucleophile role is filled by Cys111. Cys111 and Cys209 are disulfide-bonded. Position 135 (Gly135) interacts with ATP. The interaction with tRNA stretch occupies residues 159–161 (KDQ). Cys209 serves as the catalytic Cysteine persulfide intermediate.

Belongs to the MnmA/TRMU family.

It is found in the cytoplasm. The catalysed reaction is S-sulfanyl-L-cysteinyl-[protein] + uridine(34) in tRNA + AH2 + ATP = 2-thiouridine(34) in tRNA + L-cysteinyl-[protein] + A + AMP + diphosphate + H(+). Functionally, catalyzes the 2-thiolation of uridine at the wobble position (U34) of tRNA, leading to the formation of s(2)U34. This chain is tRNA-specific 2-thiouridylase MnmA, found in Koribacter versatilis (strain Ellin345).